Consider the following 120-residue polypeptide: NAD(P)H-quinone oxidoreductase subunit 3, chloroplastic (120 aa).

3 helical membrane-spanning segments follow: residues 9-29 (IFWA…LISG), 64-84 (MFAL…PWAM), and 88-108 (VLGV…IVGS).

This sequence belongs to the complex I subunit 3 family. NDH is composed of at least 16 different subunits, 5 of which are encoded in the nucleus.

The protein localises to the plastid. It is found in the chloroplast thylakoid membrane. The enzyme catalyses a plastoquinone + NADH + (n+1) H(+)(in) = a plastoquinol + NAD(+) + n H(+)(out). It carries out the reaction a plastoquinone + NADPH + (n+1) H(+)(in) = a plastoquinol + NADP(+) + n H(+)(out). Its function is as follows. NDH shuttles electrons from NAD(P)H:plastoquinone, via FMN and iron-sulfur (Fe-S) centers, to quinones in the photosynthetic chain and possibly in a chloroplast respiratory chain. The immediate electron acceptor for the enzyme in this species is believed to be plastoquinone. Couples the redox reaction to proton translocation, and thus conserves the redox energy in a proton gradient. This chain is NAD(P)H-quinone oxidoreductase subunit 3, chloroplastic, found in Carica papaya (Papaya).